A 319-amino-acid polypeptide reads, in one-letter code: Ribonucleoside-diphosphate reductase 2 subunit beta (319 aa).

Residues Asp67, Glu98, and His101 each contribute to the Fe cation site. Tyr105 is an active-site residue. Residues Glu158, Glu192, and His195 each coordinate Fe cation.

It belongs to the ribonucleoside diphosphate reductase small chain family. Tetramer of two alpha and two beta subunits. Fe cation serves as cofactor.

The catalysed reaction is a 2'-deoxyribonucleoside 5'-diphosphate + [thioredoxin]-disulfide + H2O = a ribonucleoside 5'-diphosphate + [thioredoxin]-dithiol. In terms of biological role, provides the precursors necessary for DNA synthesis. Catalyzes the biosynthesis of deoxyribonucleotides from the corresponding ribonucleotides. R2F contains the tyrosyl radical required for catalysis. The sequence is that of Ribonucleoside-diphosphate reductase 2 subunit beta (nrdF) from Escherichia coli (strain K12).